Reading from the N-terminus, the 367-residue chain is Pectate trisaccharide-lyase (367 aa).

A signal peptide spans Met1–Ala27. Positions 144, 166, and 170 each coordinate Ca(2+). The stretch at Ser151–Lys173 is one PbH1 1 repeat. Residue Arg224 is part of the active site. A PbH1 2 repeat occupies Gly263–Pro289.

Belongs to the polysaccharide lyase 1 family. As to quaternary structure, homotetramer. The cofactor is Ca(2+).

It is found in the secreted. The enzyme catalyses eliminative cleavage of unsaturated trigalacturonate as the major product from the reducing end of polygalacturonic acid/pectate.. With respect to regulation, completely inactivated by EGTA. Its function is as follows. Cleaves unsaturated trigalacturonate from pectin. Activity is highest towards polygalacturonic acid, activity on methylated pectins decreases with an increasing degree of methylation. This is Pectate trisaccharide-lyase from Thermotoga maritima (strain ATCC 43589 / DSM 3109 / JCM 10099 / NBRC 100826 / MSB8).